The primary structure comprises 131 residues: T3C protein (131 aa).

The polypeptide is T3C protein (Ovis aries (Sheep)).